Here is a 127-residue protein sequence, read N- to C-terminus: Major sperm protein 19/31/40/45/50/51/53/59/61/65/81/113/142 (127 aa).

Ala2 bears the N-acetylalanine mark. In terms of domain architecture, MSP spans Asp9 to Asn126.

Helical subfilaments are built from MSP dimers; filaments are formed from two subfilaments coiling round one another; and filaments themselves supercoil to produce bundles. Sperm.

The protein resides in the cell projection. The protein localises to the pseudopodium. Its subcellular location is the cytoplasm. It localises to the cytoskeleton. Functionally, central component in molecular interactions underlying sperm crawling. Forms an extensive filament system that extends from sperm villipoda, along the leading edge of the pseudopod. The sequence is that of Major sperm protein 19/31/40/45/50/51/53/59/61/65/81/113/142 (msp-19) from Caenorhabditis elegans.